The chain runs to 251 residues: Small ribosomal subunit protein uS2 (251 aa).

It belongs to the universal ribosomal protein uS2 family.

The polypeptide is Small ribosomal subunit protein uS2 (Chlorobium chlorochromatii (strain CaD3)).